The sequence spans 661 residues: Zeaxanthin epoxidase, chloroplastic (661 aa).

The transit peptide at methionine 1–serine 50 directs the protein to the chloroplast. FAD-binding positions include arginine 82–glutamate 110 and isoleucine 360–aspartate 373. Residues cysteine 558–isoleucine 607 form the FHA domain.

It depends on FAD as a cofactor.

It is found in the plastid. It localises to the chloroplast. It carries out the reaction all-trans-zeaxanthin + 4 reduced [2Fe-2S]-[ferredoxin] + 2 O2 + 4 H(+) = all-trans-violaxanthin + 4 oxidized [2Fe-2S]-[ferredoxin] + 2 H2O. Its pathway is plant hormone biosynthesis; abscisate biosynthesis. In terms of biological role, converts zeaxanthin into antheraxanthin and subsequently violaxanthin. Involved in the epoxidation of zeaxanthin. In Prunus armeniaca (Apricot), this protein is Zeaxanthin epoxidase, chloroplastic.